We begin with the raw amino-acid sequence, 285 residues long: MFSPADLFRAAVFSMGPESRARDSVRGPELSHREDGSGRTQEQDKPHCPCNHVLGQDCLDGQILGQLRPLSEEEESSGAAFLGEPAFPEMDSEDLRLASFYDWPSTAGIQPEPLAAAGFFHTGQQDKVRCFFCYGGLQSWERGDDPWTEHARWFPRCQFLLRSKGRDFVERIQTYTPLLGSWDQREEPEDAVSATPSAPAHGSPELLRSRRETQPEDVSEPGAKDVQEQLRQLQEERRCKVCLDRAVSIVFVPCGHFVCTECAPNLQLCPICRVPICSCVRTFLS.

The segment at 18-47 is disordered; the sequence is ESRARDSVRGPELSHREDGSGRTQEQDKPH. Residues 19 to 47 are compositionally biased toward basic and acidic residues; it reads SRARDSVRGPELSHREDGSGRTQEQDKPH. A BIR repeat occupies 96 to 161; the sequence is RLASFYDWPS…RWFPRCQFLL (66 aa). 4 residues coordinate Zn(2+): Cys130, Cys133, His150, and Cys157. The segment at 184–225 is disordered; that stretch reads QREEPEDAVSATPSAPAHGSPELLRSRRETQPEDVSEPGAKD. The RING-type zinc finger occupies 239 to 273; it reads CKVCLDRAVSIVFVPCGHFVCTECAPNLQLCPICR.

The protein belongs to the IAP family. In terms of assembly, binds to caspase-9. Interaction with DIABLO/SMAC via the BIR domain disrupts binding to caspase-9 and apoptotic suppressor activity. Interacts with TAB1. In vitro, interacts with caspase-3 and caspase-7 via its BIR domain. Autoubiquitinated and undergoes proteasome-mediated degradation. Post-translationally, the truncated protein (tLivin) not only loses its anti-apoptotic effect but also acquires a pro-apoptotic effect.

Its subcellular location is the nucleus. It is found in the cytoplasm. The protein resides in the golgi apparatus. The catalysed reaction is S-ubiquitinyl-[E2 ubiquitin-conjugating enzyme]-L-cysteine + [acceptor protein]-L-lysine = [E2 ubiquitin-conjugating enzyme]-L-cysteine + N(6)-ubiquitinyl-[acceptor protein]-L-lysine.. Apoptotic regulator capable of exerting proapoptotic and anti-apoptotic activities and plays crucial roles in apoptosis, cell proliferation, and cell cycle control. Its anti-apoptotic activity is mediated through the inhibition of CASP3, CASP7 and CASP9, as well as by its E3 ubiquitin-protein ligase activity. As it is a weak caspase inhibitor, its anti-apoptotic activity is thought to be due to its ability to ubiquitinate DIABLO/SMAC targeting it for degradation thereby promoting cell survival. May contribute to caspase inhibition, by blocking the ability of DIABLO/SMAC to disrupt XIAP/BIRC4-caspase interactions. Protects against apoptosis induced by TNF or by chemical agents such as adriamycin, etoposide or staurosporine. Suppression of apoptosis is mediated by activation of MAPK8/JNK1, and possibly also of MAPK9/JNK2. This activation depends on TAB1 and MAP3K7/TAK1. In vitro, inhibits CASP3 and proteolytic activation of pro-CASP9. The protein is Baculoviral IAP repeat-containing protein 7 (Birc7) of Mus musculus (Mouse).